A 94-amino-acid polypeptide reads, in one-letter code: FXYD domain-containing ion transport regulator 6 (94 aa).

An N-terminal signal peptide occupies residues M1–A17. Over S18 to Q34 the chain is Extracellular. A helical transmembrane segment spans residues T35 to S57. Residues R58 to N94 are Cytoplasmic-facing.

The protein belongs to the FXYD family. Regulatory subunit of the sodium/potassium-transporting ATPase which is composed of a catalytic alpha subunit, a non-catalytic beta subunit and an additional regulatory subunit. The regulatory subunit, a member of the FXYD protein family, modulates the enzymatic activity in a tissue- and isoform-specific way by changing affinities of the Na+/K+-ATPase toward Na(+), K(+) or ATP. As to expression, expressed in the neuronal fibers of the medial part of lateral habenula nucleus, thalamus, hypothalamus, stria terminalis, zona incerta, amygdaloid body and cingulum, olfactory bulb, hippocampus, cerebral cortex and cerebellum. In the cerebellum there is a predominant expression pattern in the granule layer of lobules VI-IX of the posterior lobe. Detected in inner ear.

Its subcellular location is the cell membrane. Its function is as follows. Associates with and regulates the activity of the sodium/potassium-transporting ATPase (NKA) which catalyzes the hydrolysis of ATP coupled with the exchange of Na(+) and K(+) ions across the plasma membrane. Decreases the apparent affinity of the transporter for Na(+). In addition to modulating NKA kinetics, may also function as a regulator of NKA localization to the plasma membrane. The protein is FXYD domain-containing ion transport regulator 6 (Fxyd6) of Rattus norvegicus (Rat).